Here is a 434-residue protein sequence, read N- to C-terminus: Probable carboxypeptidase BDCG_03757 (434 aa).

The signal sequence occupies residues 1 to 20 (MKLSHLAAALSAQLVAPVAA). Residues Asn136 and Asn150 are each glycosylated (N-linked (GlcNAc...) asparagine). Asp160 provides a ligand contact to Zn(2+). Catalysis depends on Glu192, which acts as the Proton acceptor. Zn(2+) is bound at residue Glu193. An N-linked (GlcNAc...) asparagine glycan is attached at Asn343.

This sequence belongs to the peptidase M20A family. Zn(2+) is required as a cofactor.

The protein localises to the secreted. This is Probable carboxypeptidase BDCG_03757 from Ajellomyces dermatitidis (strain ER-3 / ATCC MYA-2586) (Blastomyces dermatitidis).